The chain runs to 80 residues: Exodeoxyribonuclease 7 small subunit (80 aa).

Belongs to the XseB family. As to quaternary structure, heterooligomer composed of large and small subunits.

The protein localises to the cytoplasm. It catalyses the reaction Exonucleolytic cleavage in either 5'- to 3'- or 3'- to 5'-direction to yield nucleoside 5'-phosphates.. Its function is as follows. Bidirectionally degrades single-stranded DNA into large acid-insoluble oligonucleotides, which are then degraded further into small acid-soluble oligonucleotides. The protein is Exodeoxyribonuclease 7 small subunit of Streptomyces avermitilis (strain ATCC 31267 / DSM 46492 / JCM 5070 / NBRC 14893 / NCIMB 12804 / NRRL 8165 / MA-4680).